Reading from the N-terminus, the 74-residue chain is Protein WFDC9 (74 aa).

Residues 1–19 form the signal peptide; the sequence is MKFWILLLTVSAHGIVVFL.

It localises to the secreted. This is Protein WFDC9 (Wfdc9) from Rattus norvegicus (Rat).